A 262-amino-acid polypeptide reads, in one-letter code: Vibriobactin-specific 2,3-dihydro-2,3-dihydroxybenzoate dehydrogenase (262 aa).

12-36 contacts NAD(+); the sequence is LLVGSARGIGFSVLEHLLQAGAQVM. Position 145 (Ser-145) interacts with substrate. Tyr-158 functions as the Proton acceptor in the catalytic mechanism.

It belongs to the short-chain dehydrogenases/reductases (SDR) family.

The enzyme catalyses (2S,3S)-2,3-dihydroxy-2,3-dihydrobenzoate + NAD(+) = 2,3-dihydroxybenzoate + NADH + H(+). Its pathway is siderophore biosynthesis; vibriobactin biosynthesis. Functionally, involved in an early step of the biosynthesis of the catechol siderophore vibriobactin. Vibriobactin is a chelating compound involved in transporting iron from the bacterial environment into the cell cytoplasm. The sequence is that of Vibriobactin-specific 2,3-dihydro-2,3-dihydroxybenzoate dehydrogenase (vibA) from Vibrio cholerae serotype O1 (strain ATCC 39315 / El Tor Inaba N16961).